Reading from the N-terminus, the 568-residue chain is Acyl-CoA ligase gloD (568 aa).

ATP contacts are provided by residues 211–219, 352–357, Asp-436, Arg-455, and Lys-553; these read TSGTSGFLK and PGYGLT. The segment at 282–352 is SBD1; the sequence is DMQIALKSVQ…QLCPEWEINP (71 aa). The segment at 353-415 is SBD2; that stretch reads GYGLTESFVC…VRSPSVMKEY (63 aa).

The protein belongs to the ATP-dependent AMP-binding enzyme family.

It participates in mycotoxin biosynthesis. In terms of biological role, acyl-CoA ligase; part of the gene cluster that mediates the biosynthesis of pneumocandins, lipohexapeptides of the echinocandin family that prevent fungal cell wall formation by non-competitive inhibition of beta-1,3-glucan synthase. The 10,12-dimethylmyristoyl side chain is synthesized by the reducing polyketide synthase gloL/GLPKS4. The thioesterase gloN/GLHYD exclusively interacts with gloL/GLPKS4 to maintain turnover of the polyketide side chain. The 10R,12S-dimethylmyristic acid is then transferred to the first thiolation domain of the nonribosomal peptide synthetase gloA/GLNRPS4 by the acyl-AMP ligase gloD/GLligase, followed by its acylation to L-ornithine to trigger elongation of the cyclic hexapeptide. L-ornithine, 4R-hydroxyl-L-proline (generated from L-proline by the dioxygenase gloF/GLOXY2), 3S-hydroxyl-L-homotyrosine (generated by gloG/GLHtyB, gloH/GLHtyA, gloI/GLHtyC, gloJ/GLHtyD and hydroxylated at C-3 by the dioxygenase gloM/GLOXY1), 3R-hydroxyl-L-glutamine (generated from L-glutamine probably by the dioxygenase gloE/GLOXY3) and 3S-hydroxyl-L-proline (generated from L-proline by the dioxygenase gloF/GLOXY2 to yield pneumocandin B0), or 3S-hydroxyl-4S-methyl-L-proline (generated from L-leucine by the dioxygenase gloC/GLOXY4 to yield pneumocandin A0) are sequentially added to the growing chain. The last C domain of gloA/GLNRPS4 is proposed to be responsible for cyclization by condensation to form the peptide bond between L-ornithine and 3S-hydroxyl-4S-methyl-L-proline (for pneumocandin A0) or 3S-hydroxyl-L-proline (for pneumocandin B0). Finally, the subsequent C-4 hydroxylation of 3S-hydroxyl-L-homotyrosine and L-ornithine dihydroxylation at C-4 and C-5 are performed by the cytochrome P450 monooxygenases gloP/GLP450-1 and gloO/GLP450-2, respectively. This chain is Acyl-CoA ligase gloD, found in Glarea lozoyensis (strain ATCC 20868 / MF5171).